Here is a 1630-residue protein sequence, read N- to C-terminus: Transient receptor potential cation channel subfamily M member 1 (1630 aa).

Disordered regions lie at residues 1-25 (MGSMRKMSSSFKRGSIKSSTSGSQK), 65-92 (PLPSVTPSSTAEDTKQGDAQSGKWSVSK), 453-492 (APPVDTKVAEKEKKPPTATTKGRGKGKGKKKGKVKEEVEE), 620-643 (LGMEDDEPPAKGKKKKKKKKEEEI), and 824-858 (SKENEDGKEKEEENVDANADAGSRKGDEENEHKKQ). The Cytoplasmic portion of the chain corresponds to 1–877 (MGSMRKMSSS…CEFYNAPIVK (877 aa)). Positions 8–25 (SSSFKRGSIKSSTSGSQK) are enriched in low complexity. Over residues 69-92 (VTPSSTAEDTKQGDAQSGKWSVSK) the composition is skewed to polar residues. Over residues 474–485 (GRGKGKGKKKGK) the composition is skewed to basic residues. Basic and acidic residues-rich tracts occupy residues 825-834 (KENEDGKEKE) and 845-855 (GSRKGDEENEH). Residues 878–898 (FWFYTISYLGYLLLFNYVILV) traverse the membrane as a helical segment. At 899–944 (RMDGWPSPQEWIVISYIVSLALEKIREILMSEPGKLSQKIKVWLQE) the chain is on the extracellular side. A helical membrane pass occupies residues 945-965 (YWNITDLVAISMFMVGAILRL). Residues 966–975 (QNQPYMGYGR) are Cytoplasmic-facing. The helical transmembrane segment at 976–996 (VIYCVDIILWYIRVLDIFGVN) threads the bilayer. The Extracellular segment spans residues 997 to 1008 (KYLGPYVMMIGK). Residues 1009–1029 (MMIDMLYFVVIMLVVLMSFGV) form a helical membrane-spanning segment. The Cytoplasmic segment spans residues 1030–1107 (ARQAILHPEE…CIPGAWLTPA (78 aa)). Residues 1108–1128 (LMACYLLVANILLVNLLIAVF) form a helical membrane-spanning segment. N-linked (GlcNAc...) asparagine glycosylation occurs at asparagine 1129. Over 1129–1158 (NNTFFEVKSISNQVWKFQRYQLIMTFHDRP) the chain is Extracellular. A helical membrane pass occupies residues 1159 to 1179 (VLPPPMIILSHIYIIVMRLSG). The Cytoplasmic portion of the chain corresponds to 1180 to 1630 (RCRKKREGDQ…QEKGNPETEC (451 aa)). Positions 1235–1255 (IRVTSERVENMSMRLEEINER) form a coiled coil. 2 disordered regions span residues 1362 to 1414 (EDVK…AGEL) and 1575 to 1630 (CLRS…ETEC).

It belongs to the transient receptor (TC 1.A.4) family. LTrpC subfamily. TRPM1 sub-subfamily. Interacts with TRPM3; the interaction results in the formation of a heteromultimeric cation channel complex that are functionally different from the homomeric channels. Interacts with GPR179. Associates with both guanine nucleotide-binding proteins G(o) and beta-gamma G protein dimer; implicated in directly regulating TRPM1 channel open-state.

It localises to the cell membrane. The protein resides in the endoplasmic reticulum membrane. It is found in the cell projection. The protein localises to the axon. It carries out the reaction Ca(2+)(in) = Ca(2+)(out). The enzyme catalyses Mg(2+)(in) = Mg(2+)(out). It catalyses the reaction Mn(2+)(in) = Mn(2+)(out). The catalysed reaction is Ni(2+)(in) = Ni(2+)(out). Its activity is regulated as follows. Inhibited by extracellular zinc ions. Inhibited by intracellular Mg(2+). Activated by the neuroactive steroid pregnenolone sulfate. Negatively regulated by activation of GRM6 receptors in the ON-bipolar cells. In terms of biological role, constitutively open nonselective divalent cation-conducting channels which mediate the influx of Ca(2+), Mg(2+), Mn(2+), Ba(2+), and Ni(2+) into the cytoplasm, leading to membrane depolarization. Impermeable to zinc ions. In addition, forms heteromultimeric ion channels with TRPM3 which are permeable for calcium and zinc ions. Plays an essential role for the depolarizing photoresponse of retinal ON bipolar cells. In the dark, tonic release of glutamate activates the G-protein coupled receptor for glutamate GRM6, its activation induces the release of G(o) protein and the beta-gamma G protein dimer. Both subunits can interact and inactivate the TRPM1 channel. A light onset, induces decrease in glutamate release and deactivation of GRM6 leading to channel opening and membrane depolarization. May play a role in metastasis suppression. The polypeptide is Transient receptor potential cation channel subfamily M member 1 (Rattus norvegicus (Rat)).